Here is a 544-residue protein sequence, read N- to C-terminus: Chaperonin GroEL 1 (544 aa).

Residues 30 to 33 (TLGP), Lys-51, 87 to 91 (DGTTT), Gly-415, and Asp-494 contribute to the ATP site.

This sequence belongs to the chaperonin (HSP60) family. Forms a cylinder of 14 subunits composed of two heptameric rings stacked back-to-back. Interacts with the co-chaperonin GroES.

Its subcellular location is the cytoplasm. The catalysed reaction is ATP + H2O + a folded polypeptide = ADP + phosphate + an unfolded polypeptide.. In terms of biological role, together with its co-chaperonin GroES, plays an essential role in assisting protein folding. The GroEL-GroES system forms a nano-cage that allows encapsulation of the non-native substrate proteins and provides a physical environment optimized to promote and accelerate protein folding. This chain is Chaperonin GroEL 1, found in Syntrophus aciditrophicus (strain SB).